Here is a 141-residue protein sequence, read N- to C-terminus: MEKNTTSSCIFCDIVQGSITSYKIGENEHAIAFLDAFPVADGHTLVIPKKHAVDFSSTDQKELQAVSLLAKQIALKLKMTLKPSGLNYVSNEGAIAGQVVFHFHLHIVPKYETGKGFGYNVNKTNKRSLEENYQLISESKN.

The HIT domain maps to 10–117 (IFCDIVQGSI…VPKYETGKGF (108 aa)). Positions 102–106 (HFHLH) match the Histidine triad motif motif.

This is an uncharacterized protein from Mycoplasma genitalium (strain ATCC 33530 / DSM 19775 / NCTC 10195 / G37) (Mycoplasmoides genitalium).